A 24-amino-acid chain; its full sequence is Unknown protein NF004 from 2D-PAGE (24 aa).

This Naegleria fowleri (Brain eating amoeba) protein is Unknown protein NF004 from 2D-PAGE.